We begin with the raw amino-acid sequence, 3414 residues long: Genome polyprotein (3414 aa).

The disordered stretch occupies residues 1-30 (MVKKAILKGKGGGPPRRVSKETATKTRQPR). At 2 to 98 (VKKAILKGKG…LQKRGKRRSA (97 aa)) the chain is on the cytoplasmic side. The propeptide at 97–117 (SATDWMSWLLVITLLGMTLAA) is ER anchor for the capsid protein C, removed in mature form by serine protease NS3. Residues 99–119 (TDWMSWLLVITLLGMTLAATV) traverse the membrane as a helical segment. Residues 120–242 (RKERDGSTVI…HLTRVEGWVW (123 aa)) are Extracellular-facing. A glycan (N-linked (GlcNAc...) asparagine; by host) is linked at asparagine 144. The helical transmembrane segment at 243 to 260 (KNKLLALAMVTVVWLTLE) threads the bilayer. Residue serine 261 is a topological domain, cytoplasmic. Residues 262–280 (VVTRVAVLVVLLCLAPVYA) form a helical membrane-spanning segment. The Extracellular portion of the chain corresponds to 281-727 (SRCTHLENRD…HTVLGGAFNS (447 aa)). Disulfide bonds link cysteine 283/cysteine 310, cysteine 340/cysteine 396, cysteine 340/cysteine 401, cysteine 354/cysteine 385, cysteine 372/cysteine 396, and cysteine 372/cysteine 401. Positions 378 to 391 (DRGWGNHCGLFGKG) are fusion peptide. The N-linked (GlcNAc...) asparagine; by host glycan is linked to asparagine 434. Cystine bridges form between cysteine 466–cysteine 570 and cysteine 587–cysteine 618. Residues 728 to 748 (IFGGVGFLPKLLLGVALAWLG) traverse the membrane as a helical segment. Residues 749 to 755 (LNMRNPT) are Extracellular-facing. The helical transmembrane segment at 756–776 (MSMSFLLAGGLVLAMTLGVGA) threads the bilayer. Residues 777 to 1132 (DVGCAVDTER…RSMVVADNGE (356 aa)) are Extracellular-facing. Cystine bridges form between cysteine 780/cysteine 791, cysteine 831/cysteine 920, cysteine 955/cysteine 1000, cysteine 1057/cysteine 1106, cysteine 1068/cysteine 1090, and cysteine 1089/cysteine 1093. Residues asparagine 861, asparagine 983, and asparagine 999 are each glycosylated (N-linked (GlcNAc...) asparagine; by host). Residues 1133-1153 (LLSEGGVPGIVALFVVLEYII) form a helical membrane-spanning segment. Over 1154–1158 (RRRPS) the chain is Cytoplasmic. A helical transmembrane segment spans residues 1159–1179 (TGTTVVWGGIVVLALLVTGMV). Residues 1180–1187 (RIESLVRY) lie on the Lumenal side of the membrane. Residues 1188 to 1208 (VVAVGITFHLELGPEIVALML) form a helical membrane-spanning segment. Topologically, residues 1209–1293 (LQAVFELRVG…LLMALMTQQD (85 aa)) are cytoplasmic. The helical transmembrane segment at 1294–1314 (VVTVHHGLVCFLSVASACSVW) threads the bilayer. At 1315-1327 (RLLKGHREQKGLT) the chain is on the lumenal side. The chain crosses the membrane as a helical span at residues 1328 to 1348 (WVVPLAGLLGGEGSGIRLLAF). The Cytoplasmic segment spans residues 1349 to 1359 (WELSAHRGRRS). The chain crosses the membrane as a helical span at residues 1360 to 1378 (FSEPLTVVGVMLTLASGMM). Over 1379 to 1382 (RHTS) the chain is Lumenal. Residues 1383 to 1403 (QEALCALAVASFLLLMLVLGT) traverse the membrane as a helical segment. At 1404–1454 (RKMQLVAEWSGCVEWYPELVNEGGEVSLRVRQDAMGNFHLTELEKEERMMA) the chain is on the cytoplasmic side. The interval 1410–1449 (AEWSGCVEWYPELVNEGGEVSLRVRQDAMGNFHLTELEKE) is interacts with and activates NS3 protease. Residues 1455–1475 (FWLIAGLAASAIHWSGILGVM) constitute an intramembrane region (helical). At 1476 to 2160 (GLWTLTEMLR…RMAERDAPEA (685 aa)) the chain is on the cytoplasmic side. Residues 1490–1669 (SDLVFSGQGG…EAEKSRPNLP (180 aa)) form the Peptidase S7 domain. Residues histidine 1543, aspartate 1567, and serine 1627 each act as charge relay system; for serine protease NS3 activity in the active site. Residues 1675–1831 (TGWTSKGQIT…ESNGAITSEE (157 aa)) enclose the Helicase ATP-binding domain. Residue 1688-1695 (MHPGSGKT) coordinates ATP. A DEAH box motif is present at residues 1779–1782 (DEAH). Residues 1841–2000 (DGFDWITEYE…TLRGPVATFY (160 aa)) enclose the Helicase C-terminal domain. Lysine 1883 is subject to N6-acetyllysine; by host. Residues 2161 to 2181 (FLTMVEMMVLGLATLGVIWCF) traverse the membrane as a helical segment. At 2182-2189 (VVRTSISR) the chain is on the lumenal side. The helical intramembrane region spans 2190 to 2210 (MMLGTLVLLASLLLLWAGGVG). Tyrosine 2211 is a topological domain (lumenal). The chain crosses the membrane as a helical span at residues 2212–2232 (GNMAGVALIFYTLLTVLQPEA). Topologically, residues 2233-2244 (GKQRSSDDNKLA) are cytoplasmic. A helical membrane pass occupies residues 2245–2265 (YFLLTLCSLAGLVAANEMGFL). Residues 2266 to 2299 (EKTKADLSTALWSEREEPRPWSEWTNVDIQPARS) lie on the Lumenal side of the membrane. An intramembrane region (helical) is located at residues 2300–2320 (WGTYVLVVSLFTPYIIHQLQT). Residues 2321–2343 (KIQQLVNSAVASGAQAMRDLGGG) lie on the Lumenal side of the membrane. The segment at residues 2344–2364 (APFFGVAGHVMTLGVVSLIGA) is an intramembrane region (helical). At 2365–2368 (TPTS) the chain is on the lumenal side. The chain crosses the membrane as a helical span at residues 2369-2389 (LMVGVGLAALHLAIVVSGLEA). The Cytoplasmic portion of the chain corresponds to 2390 to 2432 (ELTQRAHKVFFSAMVRNPMVDGDVINPFGEGEAKPALYERKMS). Residues 2433 to 2453 (LVLATVLCLMSVVMNRTVASI) traverse the membrane as a helical segment. Over 2454 to 2477 (TEASAVGLAAAGQLLRPEADTLWT) the chain is Lumenal. A helical transmembrane segment spans residues 2478 to 2498 (MPVACGMSGVVRGSLWGFLPL). Residues 2499–3414 (GHRLWLRASG…WELRLESSII (916 aa)) are Cytoplasmic-facing. In terms of domain architecture, mRNA cap 0-1 NS5-type MT spans 2512–2776 (GGSEGDTLGD…ELDLGVGTRC (265 aa)). Position 2567 (serine 2567) interacts with S-adenosyl-L-methionine. The residue at position 2567 (serine 2567) is a Phosphoserine. Catalysis depends on lysine 2572, which acts as the For 2'-O-MTase activity. S-adenosyl-L-methionine-binding residues include glycine 2597, tryptophan 2598, threonine 2615, isoleucine 2616, aspartate 2642, and valine 2643. Aspartate 2657 (for 2'-O-MTase activity) is an active-site residue. Isoleucine 2658 provides a ligand contact to S-adenosyl-L-methionine. Catalysis depends on for 2'-O-MTase activity residues lysine 2694 and glutamate 2730. The interval 2730 to 2734 (EMYYS) is interaction with host SCRIB. Residue tyrosine 2732 coordinates S-adenosyl-L-methionine. 4 residues coordinate Zn(2+): glutamate 2950, histidine 2954, cysteine 2959, and cysteine 2962. Residues 3040–3189 (GLFYADDTAG…RPLDDRFGKA (150 aa)) form the RdRp catalytic domain. Residues histidine 3224, cysteine 3240, and cysteine 3359 each coordinate Zn(2+).

It in the N-terminal section; belongs to the class I-like SAM-binding methyltransferase superfamily. mRNA cap 0-1 NS5-type methyltransferase family. In terms of assembly, homodimer. Interacts (via N-terminus) with host EXOC1 (via C-terminus); this interaction results in EXOC1 degradation through the proteasome degradation pathway. Forms heterodimers with envelope protein E in the endoplasmic reticulum and Golgi. As to quaternary structure, homodimer; in the endoplasmic reticulum and Golgi. Interacts with protein prM. Interacts with non-structural protein 1. In terms of assembly, homodimer; Homohexamer when secreted. Interacts with envelope protein E. Interacts (via N-terminus) with serine protease NS3. As to quaternary structure, forms a heterodimer with serine protease NS3. May form homooligomers. In terms of assembly, forms a heterodimer with NS2B. Interacts with NS4B. Interacts with unphosphorylated RNA-directed RNA polymerase NS5; this interaction stimulates RNA-directed RNA polymerase NS5 guanylyltransferase activity. Interacts with serine protease NS3. Interacts with NS1. As to quaternary structure, homodimer. Interacts with host STAT2; this interaction inhibits the phosphorylation of the latter, and, when all viral proteins are present (polyprotein), targets STAT2 for degradation. Interacts with serine protease NS3. Interacts with host SCRIB; this interaction targets NS5 to the cell membrane periphery and nucleus, thereby allowing efficient host nuclear STAT1 inhibition. In terms of processing, specific enzymatic cleavages in vivo yield mature proteins. Cleavages in the lumen of endoplasmic reticulum are performed by host signal peptidase, whereas cleavages in the cytoplasmic side are performed by serine protease NS3. Signal cleavage at the 2K-4B site requires a prior NS3 protease-mediated cleavage at the 4A-2K site. Cleaved in post-Golgi vesicles by a host furin, releasing the mature small envelope protein M, and peptide pr. This cleavage is incomplete as up to 30% of viral particles still carry uncleaved prM. Post-translationally, N-glycosylated. In terms of processing, N-glycosylated. The excreted form is glycosylated and this is required for efficient secretion of the protein from infected cells. Acetylated by host KAT5. Acetylation modulates NS3 RNA-binding and unwinding activities and plays an important positive role for viral replication. Post-translationally, phosphorylated on serines residues. This phosphorylation may trigger NS5 nuclear localization.

Its subcellular location is the virion. The protein localises to the host nucleus. It is found in the host cytoplasm. It localises to the host perinuclear region. The protein resides in the secreted. Its subcellular location is the virion membrane. The protein localises to the host endoplasmic reticulum membrane. The catalysed reaction is Selective hydrolysis of -Xaa-Xaa-|-Yaa- bonds in which each of the Xaa can be either Arg or Lys and Yaa can be either Ser or Ala.. It carries out the reaction RNA(n) + a ribonucleoside 5'-triphosphate = RNA(n+1) + diphosphate. The enzyme catalyses a ribonucleoside 5'-triphosphate + H2O = a ribonucleoside 5'-diphosphate + phosphate + H(+). It catalyses the reaction ATP + H2O = ADP + phosphate + H(+). The catalysed reaction is a 5'-end (5'-triphosphoguanosine)-ribonucleoside in mRNA + S-adenosyl-L-methionine = a 5'-end (N(7)-methyl 5'-triphosphoguanosine)-ribonucleoside in mRNA + S-adenosyl-L-homocysteine. It carries out the reaction a 5'-end (N(7)-methyl 5'-triphosphoguanosine)-ribonucleoside in mRNA + S-adenosyl-L-methionine = a 5'-end (N(7)-methyl 5'-triphosphoguanosine)-(2'-O-methyl-ribonucleoside) in mRNA + S-adenosyl-L-homocysteine + H(+). Its function is as follows. Plays a role in virus budding by binding to the cell membrane and gathering the viral RNA into a nucleocapsid that forms the core of a mature virus particle. During virus entry, may induce genome penetration into the host cytoplasm after hemifusion induced by the surface proteins. Can migrate to the cell nucleus where it modulates host functions. Functionally, inhibits RNA silencing by interfering with host Dicer. In terms of biological role, prevents premature fusion activity of envelope proteins in trans-Golgi by binding to envelope protein E at pH6.0. After virion release in extracellular space, gets dissociated from E dimers. Acts as a chaperone for envelope protein E during intracellular virion assembly by masking and inactivating envelope protein E fusion peptide. prM is the only viral peptide matured by host furin in the trans-Golgi network probably to avoid catastrophic activation of the viral fusion activity in acidic Golgi compartment prior to virion release. prM-E cleavage is inefficient, and many virions are only partially matured. These uncleaved prM would play a role in immune evasion. Its function is as follows. May play a role in virus budding. Exerts cytotoxic effects by activating a mitochondrial apoptotic pathway through M ectodomain. May display a viroporin activity. Functionally, binds to host cell surface receptor and mediates fusion between viral and cellular membranes. Envelope protein is synthesized in the endoplasmic reticulum in the form of heterodimer with protein prM. They play a role in virion budding in the ER, and the newly formed immature particle is covered with 60 spikes composed of heterodimer between precursor prM and envelope protein E. The virion is transported to the Golgi apparatus where the low pH causes dissociation of PrM-E heterodimers and formation of E homodimers. prM-E cleavage is inefficient, and many virions are only partially matured. These uncleaved prM would play a role in immune evasion. In terms of biological role, involved in immune evasion, pathogenesis and viral replication. Once cleaved off the polyprotein, is targeted to three destinations: the viral replication cycle, the plasma membrane and the extracellular compartment. Essential for viral replication. Required for formation of the replication complex and recruitment of other non-structural proteins to the ER-derived membrane structures. Excreted as a hexameric lipoparticle that plays a role against host immune response. Antagonizing the complement function. Binds to the host macrophages and dendritic cells. Inhibits signal transduction originating from Toll-like receptor 3 (TLR3). Component of the viral RNA replication complex that functions in virion assembly and antagonizes the host immune response. Its function is as follows. Required cofactor for the serine protease function of NS3. May have membrane-destabilizing activity and form viroporins. Functionally, displays three enzymatic activities: serine protease, NTPase and RNA helicase. NS3 serine protease, in association with NS2B, performs its autocleavage and cleaves the polyprotein at dibasic sites in the cytoplasm: C-prM, NS2A-NS2B, NS2B-NS3, NS3-NS4A, NS4A-2K and NS4B-NS5. NS3 RNA helicase binds RNA and unwinds dsRNA in the 3' to 5' direction. In terms of biological role, regulates the ATPase activity of the NS3 helicase activity. NS4A allows NS3 helicase to conserve energy during unwinding. Functions as a signal peptide for NS4B and is required for the interferon antagonism activity of the latter. Its function is as follows. Induces the formation of ER-derived membrane vesicles where the viral replication takes place. Inhibits interferon (IFN)-induced host STAT1 phosphorylation and nuclear translocation, thereby preventing the establishment of cellular antiviral state by blocking the IFN-alpha/beta pathway. Inhibits STAT2 translocation in the nucleus after IFN-alpha treatment. Functionally, replicates the viral (+) and (-) genome, and performs the capping of genomes in the cytoplasm. NS5 methylates viral RNA cap at guanine N-7 and ribose 2'-O positions. Besides its role in RNA genome replication, also prevents the establishment of cellular antiviral state by blocking the interferon-alpha/beta (IFN-alpha/beta) signaling pathway. Inhibits host TYK2 and STAT2 phosphorylation, thereby preventing activation of JAK-STAT signaling pathway. The protein is Genome polyprotein of Tick-borne encephalitis virus European subtype (strain Neudoerfl) (NEUV).